The primary structure comprises 199 residues: TATA-box-binding protein (199 aa).

A run of 2 repeats spans residues 10 to 86 and 101 to 177.

The protein belongs to the TBP family.

General factor that plays a role in the activation of archaeal genes transcribed by RNA polymerase. Binds specifically to the TATA box promoter element which lies close to the position of transcription initiation. In Pyrobaculum islandicum (strain DSM 4184 / JCM 9189 / GEO3), this protein is TATA-box-binding protein.